The following is a 136-amino-acid chain: Large ribosomal subunit protein bL17 (136 aa).

This sequence belongs to the bacterial ribosomal protein bL17 family. In terms of assembly, part of the 50S ribosomal subunit. Contacts protein L32.

The protein is Large ribosomal subunit protein bL17 of Rickettsia conorii (strain ATCC VR-613 / Malish 7).